The primary structure comprises 965 residues: Klaroid protein (965 aa).

The tract at residues 1 to 20 (MSENTYQIETRRRSRSKTPF) is disordered. Helical transmembrane passes span 303 to 323 (TIGG…GSVL) and 343 to 363 (FLIF…LLLQ). Residues 585–612 (SSDAEVQIERLNREIAFIKLALSDKQAE) are a coiled coil. Residues 801–963 (GGQILSTRCT…YRFRVHGKPP (163 aa)) enclose the SUN domain.

In terms of assembly, core component of the LINC complex which is composed of inner nuclear membrane SUN domain-containing proteins coupled to outer nuclear membrane KASH domain-containing nesprins. Expressed in all cells in the eye disk.

It is found in the membrane. The protein resides in the cytoplasm. It localises to the cytoskeleton. Its subcellular location is the microtubule organizing center. The protein localises to the perinuclear region. In terms of biological role, component of the LINC (LInker of Nucleoskeleton and Cytoskeleton) complex involved in the connection between the nuclear lamina and the cytoskeleton. Is required to nuclear migration in eye and to anchor klar in the nuclear membrane. In Drosophila melanogaster (Fruit fly), this protein is Klaroid protein.